Consider the following 442-residue polypeptide: Putative helicase 161L (442 aa).

Residues 88-241 (IDILEKNHSV…LFPIFFGKEK (154 aa)) form the Helicase ATP-binding domain. 101–108 (CFTGFGKT) contacts ATP. The DEAH box motif lies at 194–197 (DEVH).

The protein belongs to the DEAD box helicase family. DEAH subfamily.

In Invertebrate iridescent virus 6 (IIV-6), this protein is Putative helicase 161L.